A 223-amino-acid chain; its full sequence is Octanoyltransferase (223 aa).

Residues 32–207 enclose the BPL/LPL catalytic domain; that stretch reads DETPDEIWLV…HFAHHLAITD (176 aa). Substrate is bound by residues 71–78, 138–140, and 151–153; these read RGGQVTYH, SLG, and GLA. C169 acts as the Acyl-thioester intermediate in catalysis.

It belongs to the LipB family.

The protein resides in the cytoplasm. The catalysed reaction is octanoyl-[ACP] + L-lysyl-[protein] = N(6)-octanoyl-L-lysyl-[protein] + holo-[ACP] + H(+). Its pathway is protein modification; protein lipoylation via endogenous pathway; protein N(6)-(lipoyl)lysine from octanoyl-[acyl-carrier-protein]: step 1/2. Functionally, catalyzes the transfer of endogenously produced octanoic acid from octanoyl-acyl-carrier-protein onto the lipoyl domains of lipoate-dependent enzymes. Lipoyl-ACP can also act as a substrate although octanoyl-ACP is likely to be the physiological substrate. This Erwinia tasmaniensis (strain DSM 17950 / CFBP 7177 / CIP 109463 / NCPPB 4357 / Et1/99) protein is Octanoyltransferase.